The sequence spans 193 residues: p53 apoptosis effector related to PMP-22 (193 aa).

The next 4 helical transmembrane spans lie at 12-32, 81-101, 110-130, and 151-171; these read RWIL…ALAG, LFCG…ALCG, VIGG…VIYP, and WAYG…FFFC.

This sequence belongs to the TMEM47 family. As to expression, expressed in the stratified squamous skin epithelium of the skin and the tongue, but not in simple epithelia (at protein level). Expressed in the oral epithelium, tongue epithelium and skin (at protein level). More abundant in areas of lower flow stress in the inner curvature compared to the outer curvature regions of the aorta (at protein level). Expressed in luminal cells and myoepithelium cells of the mammary epithelium (at protein level). Expression increases during the early stages of pregnancy before decreasing before birth, expression continues to be weak during involution which mirrors decreased desmosome abundance and organization at these time points (at protein level). Expressed by epithelial cells at the mucosal surface in the proximal colon (at protein level). Expressed in apoptotic cells.

The protein localises to the cell junction. It is found in the desmosome. It localises to the cell membrane. Its subcellular location is the cytoplasm. In terms of biological role, component of intercellular desmosome junctions. Plays a role in stratified epithelial integrity and cell-cell adhesion by promoting desmosome assembly. Thereby plays a role in barrier function of the skin against infection. Plays a role in mammary epithelial tissue homeostasis and remodeling during and after pregnancy, potentially via its involvement in desmosome cell-cell junctions. Required for tooth enamel development via facilitating desmosome-mediated ameloblast adhesion to the stratum intermedium during the transitional stage of amelogenesis. May also play a role in downstream transcriptional regulation of other genes involved in amelogenesis such as AMBN, ENAM, MMP20 and KLK4. Plays a role as an effector in the TP53-dependent apoptotic pathway. Positively regulates apoptosis in T-helper 17 (Th17) cell populations via caspase-dependent signaling. Promotes neutrophil transepithelial migration in response to chemoattractants such as hepoxilin A3 (HXA3), N-Formylmethionyl-leucyl-phenylalanine (fMLP) and CXCL8/IL-8. May act as a positive regulator of endothelial cell apoptosis in response to blood flow-derived shear stress. This chain is p53 apoptosis effector related to PMP-22, found in Mus musculus (Mouse).